We begin with the raw amino-acid sequence, 328 residues long: Lipoyl synthase (328 aa).

Residues C75, C80, C86, C101, C105, C108, and S315 each contribute to the [4Fe-4S] cluster site. Positions 87-304 (FNHGTATFMI…EREAKKMGYE (218 aa)) constitute a Radical SAM core domain.

The protein belongs to the radical SAM superfamily. Lipoyl synthase family. The cofactor is [4Fe-4S] cluster.

Its subcellular location is the cytoplasm. The catalysed reaction is [[Fe-S] cluster scaffold protein carrying a second [4Fe-4S](2+) cluster] + N(6)-octanoyl-L-lysyl-[protein] + 2 oxidized [2Fe-2S]-[ferredoxin] + 2 S-adenosyl-L-methionine + 4 H(+) = [[Fe-S] cluster scaffold protein] + N(6)-[(R)-dihydrolipoyl]-L-lysyl-[protein] + 4 Fe(3+) + 2 hydrogen sulfide + 2 5'-deoxyadenosine + 2 L-methionine + 2 reduced [2Fe-2S]-[ferredoxin]. The protein operates within protein modification; protein lipoylation via endogenous pathway; protein N(6)-(lipoyl)lysine from octanoyl-[acyl-carrier-protein]: step 2/2. Catalyzes the radical-mediated insertion of two sulfur atoms into the C-6 and C-8 positions of the octanoyl moiety bound to the lipoyl domains of lipoate-dependent enzymes, thereby converting the octanoylated domains into lipoylated derivatives. This chain is Lipoyl synthase, found in Colwellia psychrerythraea (strain 34H / ATCC BAA-681) (Vibrio psychroerythus).